The primary structure comprises 137 residues: MSNNQDRPGQITDESLRERLSPEAYAVTRRAGTEPPFSGRYYDHHETGIYHCICCDAPLFSSEHKFDSGSGWPSYWQPVSGDALSVVRDTSHGMIREEVRCARCDAHLGHVFPDGPPPTGLRYCINSLSLDFKAAHK.

The disordered stretch occupies residues 1–33 (MSNNQDRPGQITDESLRERLSPEAYAVTRRAGT). Residues 13–135 (DESLRERLSP…NSLSLDFKAA (123 aa)) form the MsrB domain. The Zn(2+) site is built by cysteine 52, cysteine 55, cysteine 101, and cysteine 104. Cysteine 124 functions as the Nucleophile in the catalytic mechanism.

It belongs to the MsrB Met sulfoxide reductase family. The cofactor is Zn(2+).

It catalyses the reaction L-methionyl-[protein] + [thioredoxin]-disulfide + H2O = L-methionyl-(R)-S-oxide-[protein] + [thioredoxin]-dithiol. The polypeptide is Peptide methionine sulfoxide reductase MsrB (Thioalkalivibrio sulfidiphilus (strain HL-EbGR7)).